A 658-amino-acid chain; its full sequence is MNVTITSPFWKRRRDQIVESVIPYQWGVMNDEIDTTVPDDPAGNQLADSKSHAVANLKVAAGELDDEFHGMVFQDSDVYKWLEEAAYALAYHPDPELKALCDRTVDLIARAQQSDGYLDTPYQIKSGVWADRPRFSLIQQSHEMYVMGHYIEAAVAYHQVTGNEQALEVAKKMADCLDANFGPEEGKIHGADGHPEIELALAKLYEETGEKRYLTLSQYLIDVRGQDPQFYAKQLKAMNGDNIFHDLGFYKPTYFQAAEPVRDQQTADGHAVRVGYLCTGVAHVGRLLGDQGLIDTAKRFWKNIVTRRMYVTGAIGSTHVGESFTYDYDLPNDTMYGETCASVAMSMFAQQMLDLEPKGEYADVLEKELFNGSIAGISLDGKQYYYVNALETTPDGLDNPDRHHVLSHRVDWFGCACCPANIARLIASVDRYIYTERDGGKTVLSHQFIANTAEFASGLTVEQRSNFPWDGHVEYTVSLPASATDSSVRFGLRIPGWSRGSYTLTVNGKPAVGSLEDGFVYLVVNAGDTLEIALELDMSVKFVRANSRVRSDAGQVAVMRGPLVYCAEQVDNPGDLWNYRLADGVTGADAAVAFQADLLGGVDTVDLPAVREHADEDDAPLYVDADEPRAGEPATLRLVPYYSWANREIGEMRVFQRR.

Residues H142, 192-194 (DGH), H270, and E322 contribute to the beta-L-arabinofuranose site. E322 serves as the catalytic Proton donor/acceptor. Zn(2+) contacts are provided by E338, C340, C417, and C418. Catalysis depends on C417, which acts as the Nucleophile; S-glycosyl-cysteine intermediate.

This sequence belongs to the glycosyl hydrolase 127 family. As to quaternary structure, homodimer in solution. Zn(2+) is required as a cofactor.

The catalysed reaction is beta-L-arabinofuranosyl-(1-&gt;2)-beta-L-arabinofuranose + H2O = 2 beta-L-arabinofuranose. With respect to regulation, strongly inhibited in the presence of thiol modifiers, suggesting a crucial role for cysteine residues in catalysis. Slightly inhibited by EDTA. Functionally, beta-L-arabinofuranosidase that removes the beta-L-arabinofuranose residue from the non-reducing end of various substrates, including beta-L-arabinofuranosyl-hydroxyproline (Ara-Hyp), Ara-beta-1,2-Ara-beta-Hyp (Ara(2)-Hyp), Ara-beta-1,2-Ara-beta-1,2-Ara-beta-Hyp (Ara(3)-Hyp), and beta-L-arabinofuranosyl-(1-&gt;2)-1-O-methyl-beta-L-arabinofuranose. In the presence of 1-alkanols, shows transglycosylation activity, retaining the anomeric configuration of the arabinofuranose residue. This is Non-reducing end beta-L-arabinofuranosidase from Bifidobacterium longum subsp. longum (strain ATCC 15707 / DSM 20219 / JCM 1217 / NCTC 11818 / E194b).